We begin with the raw amino-acid sequence, 388 residues long: Arginine biosynthesis bifunctional protein ArgJ (388 aa).

Substrate contacts are provided by Thr150, Lys172, Thr183, Glu263, Asn383, and Ser388. Residue Thr183 is the Nucleophile of the active site.

Belongs to the ArgJ family. In terms of assembly, heterotetramer of two alpha and two beta chains.

It localises to the cytoplasm. It catalyses the reaction N(2)-acetyl-L-ornithine + L-glutamate = N-acetyl-L-glutamate + L-ornithine. The enzyme catalyses L-glutamate + acetyl-CoA = N-acetyl-L-glutamate + CoA + H(+). Its pathway is amino-acid biosynthesis; L-arginine biosynthesis; L-ornithine and N-acetyl-L-glutamate from L-glutamate and N(2)-acetyl-L-ornithine (cyclic): step 1/1. The protein operates within amino-acid biosynthesis; L-arginine biosynthesis; N(2)-acetyl-L-ornithine from L-glutamate: step 1/4. Its function is as follows. Catalyzes two activities which are involved in the cyclic version of arginine biosynthesis: the synthesis of N-acetylglutamate from glutamate and acetyl-CoA as the acetyl donor, and of ornithine by transacetylation between N(2)-acetylornithine and glutamate. This chain is Arginine biosynthesis bifunctional protein ArgJ, found in Corynebacterium glutamicum (strain ATCC 13032 / DSM 20300 / JCM 1318 / BCRC 11384 / CCUG 27702 / LMG 3730 / NBRC 12168 / NCIMB 10025 / NRRL B-2784 / 534).